Consider the following 286-residue polypeptide: Undecaprenyl-diphosphatase (286 aa).

7 helical membrane-spanning segments follow: residues 43 to 63, 91 to 111, 118 to 138, 150 to 170, 189 to 209, 236 to 256, and 264 to 284; these read FWKM…PIYF, LTII…KIIG, IIMG…DVMF, MSVG…VFPG, AAAL…ATCY, ITLA…VAWF, and GFVP…AWAL.

This sequence belongs to the UppP family.

The protein localises to the cell inner membrane. The enzyme catalyses di-trans,octa-cis-undecaprenyl diphosphate + H2O = di-trans,octa-cis-undecaprenyl phosphate + phosphate + H(+). In terms of biological role, catalyzes the dephosphorylation of undecaprenyl diphosphate (UPP). Confers resistance to bacitracin. This chain is Undecaprenyl-diphosphatase, found in Koribacter versatilis (strain Ellin345).